A 187-amino-acid chain; its full sequence is Putative protein YbeM (187 aa).

One can recognise a CN hydrolase domain in the interval 1–163; that stretch reads MMTTILTIHV…PALIMAEVTP (163 aa).

Belongs to the carbon-nitrogen hydrolase superfamily. NIT1/NIT2 family.

In terms of biological role, pseudogene resulting from a nucleotide deletion that introduces a premature stop codon at position 66. This is the C-terminal fragment. The intact protein (AC A0A140NCB4) hydrolyzes deaminated glutathione (dGSH, 2-oxoglutaramate) to alpha-ketoglutarate (alpha-KG) and cysteinylglycine, has less activity against alpha-ketoglutaramate (a-KGM) and no activity on glutathione or L-glutamine. May function as a metabolite repair enzyme. In Escherichia coli (strain K12), this protein is Putative protein YbeM (ybeM).